The following is a 118-amino-acid chain: V-type proton ATPase subunit G 2 (118 aa).

The segment at 23-91 (ADARKRKARR…QGMQSSQQRN (69 aa)) is disordered. Residues 35 to 55 (QAKEEAQMEVEQYRREREQEF) are compositionally biased toward basic and acidic residues. Composition is skewed to polar residues over residues 56–69 (QSKQ…QGNL) and 78–89 (RRQVQGMQSSQQ).

The protein belongs to the V-ATPase G subunit family. V-ATPase is a heteromultimeric enzyme made up of two complexes: the ATP-hydrolytic V1 complex and the proton translocation V0 complex. The V1 complex consists of three catalytic AB heterodimers that form a heterohexamer, three peripheral stalks each consisting of EG heterodimers, one central rotor including subunits D and F, and the regulatory subunits C and H. The proton translocation complex V0 consists of the proton transport subunit a, a ring of proteolipid subunits c9c'', rotary subunit d, subunits e and f, and the accessory subunits ATP6AP1/Ac45 and ATP6AP2/PRR.

It is found in the melanosome. The protein localises to the cytoplasmic vesicle. The protein resides in the clathrin-coated vesicle membrane. Subunit of the V1 complex of vacuolar(H+)-ATPase (V-ATPase), a multisubunit enzyme composed of a peripheral complex (V1) that hydrolyzes ATP and a membrane integral complex (V0) that translocates protons. V-ATPase is responsible for acidifying and maintaining the pH of intracellular compartments and in some cell types, is targeted to the plasma membrane, where it is responsible for acidifying the extracellular environment. In Mus musculus (Mouse), this protein is V-type proton ATPase subunit G 2 (Atp6v1g2).